The primary structure comprises 721 residues: Glucans biosynthesis glucosyltransferase H (721 aa).

7 helical membrane-spanning segments follow: residues 54-74 (LIMV…YQVL), 85-105 (VVLV…VSAL), 404-424 (GIGA…GILI), 458-478 (FAGT…LVLI), 493-513 (FGGV…MMVF), 548-568 (YALP…VSWP), and 569-589 (LLLW…VALL).

It belongs to the glycosyltransferase 2 family. OpgH subfamily.

Its subcellular location is the cell inner membrane. It functions in the pathway glycan metabolism; osmoregulated periplasmic glucan (OPG) biosynthesis. Involved in the biosynthesis of osmoregulated periplasmic glucans (OPGs). This Rhodopseudomonas palustris (strain TIE-1) protein is Glucans biosynthesis glucosyltransferase H.